A 487-amino-acid chain; its full sequence is Zinc finger and BTB domain-containing protein 32 (487 aa).

The 59-residue stretch at 29 to 87 (CDTLITVGSQEFPAHSLVLAGVSQQLGRRGQWALGEGISPSTFAQLLNFVYGESVELQP) folds into the BTB domain. Basic and acidic residues predominate over residues 112 to 166 (ARGDRAKKPDPGLKKHQEEPEKPSRNPERELGDPGEKQKPEQVSRTGGREQEMLH). 2 disordered regions span residues 112–244 (ARGD…TSVT) and 308–371 (QNQL…ARSR). Polar residues predominate over residues 308-320 (QNQLASSSPTPGS). The segment covering 357–369 (PPRPHPPPAPPAR) has biased composition (pro residues). 3 C2H2-type zinc fingers span residues 373–395 (YACS…YRVH), 401–423 (FSCS…LRTH), and 428–450 (YRCS…MRGH). Positions 468–487 (SSSRPSRPSTSPCCPSSSTT) are disordered.

Belongs to the krueppel C2H2-type zinc-finger protein family. As to quaternary structure, homodimer (via PTB domain). Interacts with the N-terminal of FANCC. Interacts with ZBTB16. Interacts with GATA3. In terms of tissue distribution, predominantly expressed in testis. Some isoforms are ubiquitously expressed.

Its subcellular location is the nucleus. In terms of biological role, DNA-binding protein that binds to the to a 5'-TGTACAGTGT-3' core sequence. May function as a transcriptional transactivator and transcriptional repressor. Probably exerts its repressor effect by preventing GATA3 from binding to DNA. May play a role in regulating the differentiation and activation of helper T-cells. The protein is Zinc finger and BTB domain-containing protein 32 (ZBTB32) of Homo sapiens (Human).